The following is a 1005-amino-acid chain: DNA double-strand break repair Rad50 ATPase (1005 aa).

ATP contacts are provided by residues K14, 35–40 (GSGKSS), 62–64 (ITK), and Q134. 4 coiled-coil regions span residues 189–230 (KENY…IEKL), 292–321 (LVDEIRKIESRLRELKSHYEDYLKLTKQLE), 346–379 (LDTLLNKIKDEIERVETIKDLLEELKNLNEEIEK), and 404–498 (AVEY…LKEV). Residues 457–554 (IEEKKKVLEN…DIEKLKKEID (98 aa)) enclose the Zinc-hook domain. Zn(2+) contacts are provided by C502 and C505. Coiled coils occupy residues 523-600 (TQLN…YVIN), 656-692 (KEKCREELNKLREDEREINRLKDKLNELKNKEKELIE), and 800-834 (RQELDNVREQKTEIETGIEYLKKDVESLKARLKEM).

The protein belongs to the SMC family. RAD50 subfamily. As to quaternary structure, homodimer. Forms a heterotetramer composed of two Mre11 subunits and two Rad50 subunits. Requires Zn(2+) as cofactor.

Functionally, part of the Rad50/Mre11 complex, which is involved in the early steps of DNA double-strand break (DSB) repair. The complex may facilitate opening of the processed DNA ends to aid in the recruitment of HerA and NurA. Rad50 controls the balance between DNA end bridging and DNA resection via ATP-dependent structural rearrangements of the Rad50/Mre11 complex. This Methanocaldococcus jannaschii (strain ATCC 43067 / DSM 2661 / JAL-1 / JCM 10045 / NBRC 100440) (Methanococcus jannaschii) protein is DNA double-strand break repair Rad50 ATPase.